Reading from the N-terminus, the 529-residue chain is MPAAPDYPSAPDLVAPKRALLSVSDKTGLVDAAKILHAAGVELVSTGGTKAAIAAAGVPVKDVSDLTGFPEMMDGRVKTLHPVVHGGLLGVRDAADHAKAMADHGIGGIDILYVNLYPFEATVAKGGSYAECVENIDIGGPAMIRSAAKNHGYVAVCTDPSDLAEVLEALKAGGTTLALRQQLAARAYARTAAYDAAISAWFAEALGQDFPARKSIAGTLRQTMRYGENPHQKAAFYTFPNPRPGVATATQLQGKELSYNNINDTDAAFELIAEFDPAAGPAVAIIKHANPCGVAVGATQREAYERALACDPTSAFGGIVAVNSRLTREAAEAMVEIFTEVVIAPEADEDAIAVFAAKKNLRLLVTGGLPDALSTGDTFKSVAGGFLVQSRDDARIKASDLKIVTQRQPTEEEVRDMLFAFTVGKHVKSNAIVYARAGQTLGVGAGQMNRKDSARIAALRAADFGLDLKGCACASEAFFPFADGLIQAAEAGATAIIQPGGSMRDPEVIEAADKLGLTMAFTGVRVFRH.

An MGS-like domain is found at 8-158; the sequence is PSAPDLVAPK…KNHGYVAVCT (151 aa).

Belongs to the PurH family.

It catalyses the reaction (6R)-10-formyltetrahydrofolate + 5-amino-1-(5-phospho-beta-D-ribosyl)imidazole-4-carboxamide = 5-formamido-1-(5-phospho-D-ribosyl)imidazole-4-carboxamide + (6S)-5,6,7,8-tetrahydrofolate. The catalysed reaction is IMP + H2O = 5-formamido-1-(5-phospho-D-ribosyl)imidazole-4-carboxamide. It functions in the pathway purine metabolism; IMP biosynthesis via de novo pathway; 5-formamido-1-(5-phospho-D-ribosyl)imidazole-4-carboxamide from 5-amino-1-(5-phospho-D-ribosyl)imidazole-4-carboxamide (10-formyl THF route): step 1/1. It participates in purine metabolism; IMP biosynthesis via de novo pathway; IMP from 5-formamido-1-(5-phospho-D-ribosyl)imidazole-4-carboxamide: step 1/1. This is Bifunctional purine biosynthesis protein PurH from Caulobacter vibrioides (strain ATCC 19089 / CIP 103742 / CB 15) (Caulobacter crescentus).